Here is a 556-residue protein sequence, read N- to C-terminus: MKSDIEIAQSVALQPITDIVKKVGIDGDDIELYGKYKAKLSFEKMKAVEANEPGKLILVTAINPTPAGEGKSTMSIGLADALNQMGKKTMLALREPSLGPVMGIKGGAAGGGYAQVLPMEDINLHFTGDMHAITTANNALSALIDNHLQQGNDLGIDPRRIIWKRVLDLNDRALRQVIVGLGSPVNGVPREDGFDITVASEIMAILCLATDLKDLKKRLADIVVAYTYDRKPVYVRDLKVEGALTLILKDAIKPNLVQTIYGTPALIHGGPFANIAHGCNSVLATSTALRLADYTVTEAGFGADLGAEKFLNIKVPNLPKAPDAIVIVATLRALKMHGGVAKSDLAAENCEAVRLGFANLKRHVENMRQFKVPVVVAINEFVADTEAEIATLKALCEEIKVPVELASVWANGAEGGIALAKTVVRVIDQEAADYKRLYSDEDTLEEKVINIVTQIYDGKAVQFGPKAKTQLKQFAEFGWDKLPVCMAKTQYSFSDNPSLLGAPTDFDITIREFVPKTGAGFIVGLTGDVMTMPGLPKVPAAMAMDVAENGTALGLF.

65 to 72 (TPAGEGKS) is a binding site for ATP.

Belongs to the formate--tetrahydrofolate ligase family.

It catalyses the reaction (6S)-5,6,7,8-tetrahydrofolate + formate + ATP = (6R)-10-formyltetrahydrofolate + ADP + phosphate. Its pathway is one-carbon metabolism; tetrahydrofolate interconversion. This chain is Formate--tetrahydrofolate ligase 1, found in Streptococcus pyogenes serotype M4 (strain MGAS10750).